The chain runs to 399 residues: MAIDIKAPTFPESIADGTVATWHKKPGEPVKRDELIVDIETDKVVMEVLAEADGVIAEIVKNEGDTVLSGELLGKLTEGGAATAAPAAAPAPAAAAPAAAEAPILSPAARKIAEENAIAADSITGTGKGGRVTKEDAVAAAEAKKSAPAGQPAPAATAAPLFAAGDRVEKRVPMTRLRAKVAERLVEAQSSMAMLTTFNEVNMKPVMELRAKYKDLFEKTHNGVRLGFMSFFVKAAVEALKRQPGVNASIDGNDIVYHGYQDIGVAVSSDRGLVVPVLRNAEFMSLAEIEGGINEFGKKAKAGKLTIEEMTGGTFTISNGGVFGSLLSTPIVNPPQTAILGMHKIQERPMAVNGQVVILPMMYLALSYDHRLIDGKEAVTFLVTMKDLLEDPARLLLDV.

The Lipoyl-binding domain maps to 2–77 (AIDIKAPTFP…LSGELLGKLT (76 aa)). N6-lipoyllysine is present on lysine 43. The 38-residue stretch at 104–141 (ILSPAARKIAEENAIAADSITGTGKGGRVTKEDAVAAA) folds into the Peripheral subunit-binding (PSBD) domain. Catalysis depends on residues histidine 370 and aspartate 374.

Belongs to the 2-oxoacid dehydrogenase family. Forms a 24-polypeptide structural core with octahedral symmetry. Part of the 2-oxoglutarate dehydrogenase (OGDH) complex composed of E1 (2-oxoglutarate dehydrogenase), E2 (dihydrolipoamide succinyltransferase) and E3 (dihydrolipoamide dehydrogenase); the complex contains multiple copies of the three enzymatic components (E1, E2 and E3). Requires (R)-lipoate as cofactor.

The catalysed reaction is N(6)-[(R)-dihydrolipoyl]-L-lysyl-[protein] + succinyl-CoA = N(6)-[(R)-S(8)-succinyldihydrolipoyl]-L-lysyl-[protein] + CoA. The protein operates within amino-acid degradation; L-lysine degradation via saccharopine pathway; glutaryl-CoA from L-lysine: step 6/6. In terms of biological role, E2 component of the 2-oxoglutarate dehydrogenase (OGDH) complex which catalyzes the second step in the conversion of 2-oxoglutarate to succinyl-CoA and CO(2). The sequence is that of Dihydrolipoyllysine-residue succinyltransferase component of 2-oxoglutarate dehydrogenase complex (sucB) from Azotobacter vinelandii.